Here is a 368-residue protein sequence, read N- to C-terminus: BTB/POZ and TAZ domain-containing protein 5 (368 aa).

Residues 1–25 (MENMDDFSPENVLAPPPPPPPMKKS) form a disordered region. The 69-residue stretch at 55–123 (ADVLIHTDDN…LYSSCYEKQD (69 aa)) folds into the BTB domain. The TAZ-type zinc finger occupies 233 to 324 (QTYTQLYEAM…SEQCKVPLCS (92 aa)). The segment at 335–358 (RKDEKRWKLLVRNVLSTKRIGGSP) is caM-binding.

As to quaternary structure, interacts with CUL3A. Preferentially expressed in young leaves, roots and stems.

The protein resides in the cytoplasm. It participates in protein modification; protein ubiquitination. Its function is as follows. May act as a substrate-specific adapter of an E3 ubiquitin-protein ligase complex (CUL3-RBX1-BTB) which mediates the ubiquitination and subsequent proteasomal degradation of target proteins. This chain is BTB/POZ and TAZ domain-containing protein 5 (BT5), found in Arabidopsis thaliana (Mouse-ear cress).